A 401-amino-acid polypeptide reads, in one-letter code: 8-amino-7-oxononanoate synthase (401 aa).

Arg24 is a substrate binding site. 111-112 contacts pyridoxal 5'-phosphate; it reads GF. His137 is a substrate binding site. Pyridoxal 5'-phosphate-binding residues include Ser183, His211, and Thr240. An N6-(pyridoxal phosphate)lysine modification is found at Lys243. Thr357 contributes to the substrate binding site.

Belongs to the class-II pyridoxal-phosphate-dependent aminotransferase family. BioF subfamily. As to quaternary structure, homodimer. The cofactor is pyridoxal 5'-phosphate.

The catalysed reaction is 6-carboxyhexanoyl-[ACP] + L-alanine + H(+) = (8S)-8-amino-7-oxononanoate + holo-[ACP] + CO2. The protein operates within cofactor biosynthesis; biotin biosynthesis. In terms of biological role, catalyzes the decarboxylative condensation of pimeloyl-[acyl-carrier protein] and L-alanine to produce 8-amino-7-oxononanoate (AON), [acyl-carrier protein], and carbon dioxide. The sequence is that of 8-amino-7-oxononanoate synthase from Xylella fastidiosa (strain M12).